Reading from the N-terminus, the 385-residue chain is Glutamate 5-kinase (385 aa).

Lys-17 lines the ATP pocket. Residues Ser-64, Asp-151, and Asn-165 each coordinate substrate. An ATP-binding site is contributed by 185–186 (SD). Positions 291–367 (SGTVRVDAGA…NQIDNILGYN (77 aa)) constitute a PUA domain.

The protein belongs to the glutamate 5-kinase family.

Its subcellular location is the cytoplasm. The enzyme catalyses L-glutamate + ATP = L-glutamyl 5-phosphate + ADP. Its pathway is amino-acid biosynthesis; L-proline biosynthesis; L-glutamate 5-semialdehyde from L-glutamate: step 1/2. Functionally, catalyzes the transfer of a phosphate group to glutamate to form L-glutamate 5-phosphate. This Methanosarcina acetivorans (strain ATCC 35395 / DSM 2834 / JCM 12185 / C2A) protein is Glutamate 5-kinase.